A 205-amino-acid polypeptide reads, in one-letter code: Holliday junction branch migration complex subunit RuvA (205 aa).

Residues 1 to 64 (MIGKLKGILE…EEAIRLFGFV (64 aa)) form a domain I region. The tract at residues 65-143 (AKAEQEWFCL…PFNDNALHFT (79 aa)) is domain II. The interval 144–149 (PQPHLE) is flexible linker. The segment at 150–205 (VTHQPTNDALSALVKLGFERDQAARALALAMNALEGETVSSALLIRHSLKLLSPST) is domain III.

The protein belongs to the RuvA family. As to quaternary structure, homotetramer. Forms an RuvA(8)-RuvB(12)-Holliday junction (HJ) complex. HJ DNA is sandwiched between 2 RuvA tetramers; dsDNA enters through RuvA and exits via RuvB. An RuvB hexamer assembles on each DNA strand where it exits the tetramer. Each RuvB hexamer is contacted by two RuvA subunits (via domain III) on 2 adjacent RuvB subunits; this complex drives branch migration. In the full resolvosome a probable DNA-RuvA(4)-RuvB(12)-RuvC(2) complex forms which resolves the HJ.

It localises to the cytoplasm. The RuvA-RuvB-RuvC complex processes Holliday junction (HJ) DNA during genetic recombination and DNA repair, while the RuvA-RuvB complex plays an important role in the rescue of blocked DNA replication forks via replication fork reversal (RFR). RuvA specifically binds to HJ cruciform DNA, conferring on it an open structure. The RuvB hexamer acts as an ATP-dependent pump, pulling dsDNA into and through the RuvAB complex. HJ branch migration allows RuvC to scan DNA until it finds its consensus sequence, where it cleaves and resolves the cruciform DNA. This chain is Holliday junction branch migration complex subunit RuvA, found in Bartonella quintana (strain Toulouse) (Rochalimaea quintana).